Consider the following 346-residue polypeptide: Phenylalanine--tRNA ligase alpha subunit (346 aa).

Glu261 contributes to the Mg(2+) binding site.

Belongs to the class-II aminoacyl-tRNA synthetase family. Phe-tRNA synthetase alpha subunit type 1 subfamily. Tetramer of two alpha and two beta subunits. The cofactor is Mg(2+).

The protein localises to the cytoplasm. The catalysed reaction is tRNA(Phe) + L-phenylalanine + ATP = L-phenylalanyl-tRNA(Phe) + AMP + diphosphate + H(+). The chain is Phenylalanine--tRNA ligase alpha subunit from Dehalococcoides mccartyi (strain ATCC BAA-2100 / JCM 16839 / KCTC 5957 / BAV1).